We begin with the raw amino-acid sequence, 348 residues long: Dihydroorotase (348 aa).

2 residues coordinate Zn(2+): His-14 and His-16. Residues His-16–Arg-18 and Asn-42 contribute to the substrate site. Zn(2+) is bound by residues Lys-100, His-137, and His-175. Lys-100 is modified (N6-carboxylysine). His-137 is a binding site for substrate. Position 220 (Leu-220) interacts with substrate. Residue Asp-248 participates in Zn(2+) binding. Asp-248 is an active-site residue. Substrate is bound by residues His-252 and Ala-264.

It belongs to the metallo-dependent hydrolases superfamily. DHOase family. Class II DHOase subfamily. Homodimer. Zn(2+) serves as cofactor.

The catalysed reaction is (S)-dihydroorotate + H2O = N-carbamoyl-L-aspartate + H(+). It functions in the pathway pyrimidine metabolism; UMP biosynthesis via de novo pathway; (S)-dihydroorotate from bicarbonate: step 3/3. Its function is as follows. Catalyzes the reversible cyclization of carbamoyl aspartate to dihydroorotate. This chain is Dihydroorotase, found in Pseudomonas putida (strain W619).